The following is a 108-amino-acid chain: Insertion element IS629 uncharacterized 12 kDa protein S4062 (108 aa).

It belongs to the transposase 8 family.

In Shigella flexneri, this protein is Insertion element IS629 uncharacterized 12 kDa protein S4062.